Consider the following 158-residue polypeptide: uncharacterized protein (158 aa).

The next 2 helical transmembrane spans lie at 10–30 (LSSL…QFIV) and 137–157 (IEVF…AYFF).

It localises to the cell membrane. This is an uncharacterized protein from Bacillus subtilis (strain 168).